The chain runs to 464 residues: Capsule biosynthesis protein CapB (464 aa).

Residues 65 to 85 form a helical membrane-spanning segment; sequence LIQMIFIIGICTVFLIIYGIW.

Its subcellular location is the cell membrane. Its pathway is capsule biogenesis; capsule polysaccharide biosynthesis. In terms of biological role, essential for the synthesis of the polyglutamate capsule of B.anthracis which is one of the principal virulence factors during anthrax infection. May form a polyglutamyl synthetase complex together with proteins CapA and CapC. The chain is Capsule biosynthesis protein CapB (capB) from Bacillus anthracis.